The chain runs to 263 residues: Small ribosomal subunit protein uS2 (263 aa).

A compositionally biased stretch (basic and acidic residues) spans 230–249 (GEALVNEEKEITDEEKKEVL). Positions 230-263 (GEALVNEEKEITDEEKKEVLDEAMSEEDFGEEQE) are disordered. The segment covering 250–263 (DEAMSEEDFGEEQE) has biased composition (acidic residues).

Belongs to the universal ribosomal protein uS2 family.

The protein is Small ribosomal subunit protein uS2 of Campylobacter jejuni subsp. jejuni serotype O:2 (strain ATCC 700819 / NCTC 11168).